We begin with the raw amino-acid sequence, 447 residues long: Alkylglycerol monooxygenase (447 aa).

2 helical membrane-spanning segments follow: residues 43–63 and 111–131; these read ATPFFIFLILLELVVSWILKG and WDSPWTWYLTFLGVDFGYYWF. One can recognise a Fatty acid hydroxylase domain in the interval 118–249; that stretch reads YLTFLGVDFG…LIIWDRIFGT (132 aa). Positions 132-136 match the Histidine box-1 motif; that stretch reads HRMAH. Positions 145-149 match the Histidine box-2 motif; that stretch reads HQAHH. A helical transmembrane segment spans residues 170–190; that stretch reads SWVFYCPLALFVPPSVFAVHI. The Histidine box-3 signature appears at 221–225; that stretch reads HRVHH. The next 3 helical transmembrane spans lie at 334–354, 363–383, and 413–433; these read FLKIYAVLQFAVMLVFYEETF, VTILLRICFIILTLTSIGFLL, and IESLSFAFEIFFSVCIAFWGV.

Belongs to the sterol desaturase family. TMEM195 subfamily. It depends on Fe cation as a cofactor.

Its subcellular location is the endoplasmic reticulum membrane. It catalyses the reaction 1-O-(1,2-saturated-alkyl)-sn-glycerol + (6R)-L-erythro-5,6,7,8-tetrahydrobiopterin + O2 = a 1-(1-hydroxyalkyl)-sn-glycerol + (6R)-L-erythro-6,7-dihydrobiopterin + H2O. Its function is as follows. Glyceryl-ether monooxygenase that cleaves the O-alkyl bond of ether lipids. Ether lipids are essential components of brain membranes. The chain is Alkylglycerol monooxygenase (Agmo) from Rattus norvegicus (Rat).